The sequence spans 330 residues: Ribosomal RNA small subunit methyltransferase H (330 aa).

S-adenosyl-L-methionine contacts are provided by residues G35–Y37, D53, F80, D101, and Q108.

It belongs to the methyltransferase superfamily. RsmH family.

The protein localises to the cytoplasm. The enzyme catalyses cytidine(1402) in 16S rRNA + S-adenosyl-L-methionine = N(4)-methylcytidine(1402) in 16S rRNA + S-adenosyl-L-homocysteine + H(+). Its function is as follows. Specifically methylates the N4 position of cytidine in position 1402 (C1402) of 16S rRNA. The sequence is that of Ribosomal RNA small subunit methyltransferase H from Rhodopseudomonas palustris (strain BisB18).